Consider the following 772-residue polypeptide: A type blood N-acetyl-alpha-D-galactosamine deacetylase (772 aa).

An N-terminal signal peptide occupies residues 1-27; sequence MRNRRKAVSLLTGLLVTAQLFPTAALA. Positions 87 and 123 each coordinate substrate. A divalent metal cation is bound at residue Asp-126. Positions 180–402 are deacetylase activity; that stretch reads WSKPTSDAER…WRIGYAENSF (223 aa). Tyr-236 is a substrate binding site. A divalent metal cation is bound at residue His-278. An F5/8 type C domain is found at 494-605; sequence SDDLEIAVVE…KDLVASGSDW (112 aa). The segment at 502-765 is CBM32 carbohydrate-binding domain; the sequence is VENPYTLIPQ…VCVSPVVDFD (264 aa). The tract at residues 515–772 is not required for activity on soluble substrates; it reads TATATSVYGG…DFDYFSYVGE (258 aa).

A divalent metal cation is required as a cofactor.

It catalyses the reaction an N-acetyl-alpha-D-galactosaminyl-(1-&gt;3)-[alpha-L-fucosyl-(1-&gt;2)]-beta-D-galactosyl derivative + H2O = an alpha-D-galactosaminyl-(1-&gt;3)-[alpha-L-fucosyl-(1-&gt;2)]-beta-D-galactosyl derivative + acetate. Inhibited by EDTA. Functionally, one of an enzyme pair that work together to convert the A antigen to the H antigen of the O blood type, which together release galactosamine. Catalyzes the first step in the conversion, generating the substrate for the subsequent enzyme (FpGalNase, AC P0DTR5). Works on many different A antigen subtypes. Glu-90 probably activates a nucleophilic water molecule to start the deacetylation reaction. This is A type blood N-acetyl-alpha-D-galactosamine deacetylase from Flavonifractor plautii (Fusobacterium plautii).